The sequence spans 370 residues: DNA replication and repair protein RecF (370 aa).

An ATP-binding site is contributed by 30-37 (GENAQGKT).

It belongs to the RecF family.

It localises to the cytoplasm. Its function is as follows. The RecF protein is involved in DNA metabolism; it is required for DNA replication and normal SOS inducibility. RecF binds preferentially to single-stranded, linear DNA. It also seems to bind ATP. The polypeptide is DNA replication and repair protein RecF (Staphylococcus aureus (strain bovine RF122 / ET3-1)).